The primary structure comprises 356 residues: Phosphate acyltransferase (356 aa).

This sequence belongs to the PlsX family. Homodimer. Probably interacts with PlsY.

It localises to the cytoplasm. It carries out the reaction a fatty acyl-[ACP] + phosphate = an acyl phosphate + holo-[ACP]. It participates in lipid metabolism; phospholipid metabolism. Catalyzes the reversible formation of acyl-phosphate (acyl-PO(4)) from acyl-[acyl-carrier-protein] (acyl-ACP). This enzyme utilizes acyl-ACP as fatty acyl donor, but not acyl-CoA. This is Phosphate acyltransferase from Bartonella henselae (strain ATCC 49882 / DSM 28221 / CCUG 30454 / Houston 1) (Rochalimaea henselae).